Here is a 586-residue protein sequence, read N- to C-terminus: uncharacterized protein (586 aa).

The segment at methionine 1–aspartate 115 is disordered. The segment covering threonine 8–glutamate 20 has biased composition (basic and acidic residues). Residues valine 21–glycine 31 show a composition bias toward polar residues. Basic and acidic residues predominate over residues tyrosine 35–proline 44. The span at threonine 76 to threonine 107 shows a compositional bias: polar residues. 6 WD repeats span residues glutamine 184–glutamate 223, glycine 253–valine 291, arginine 293–tryptophan 333, glutamate 335–serine 374, cysteine 387–lysine 430, and serine 432–alanine 474.

Its subcellular location is the cytoplasm. The protein localises to the nucleus. This is an uncharacterized protein from Schizosaccharomyces pombe (strain 972 / ATCC 24843) (Fission yeast).